We begin with the raw amino-acid sequence, 136 residues long: Small ribosomal subunit protein bS6 (136 aa).

Basic and acidic residues predominate over residues glutamate 97–glutamate 128. Residues glutamate 97 to glutamate 136 form a disordered region.

This sequence belongs to the bacterial ribosomal protein bS6 family.

Binds together with bS18 to 16S ribosomal RNA. The protein is Small ribosomal subunit protein bS6 of Bartonella bacilliformis (strain ATCC 35685 / KC583 / Herrer 020/F12,63).